A 475-amino-acid polypeptide reads, in one-letter code: Glycogen synthase (475 aa).

Lys15 is a binding site for ADP-alpha-D-glucose.

The protein belongs to the glycosyltransferase 1 family. Bacterial/plant glycogen synthase subfamily.

The enzyme catalyses [(1-&gt;4)-alpha-D-glucosyl](n) + ADP-alpha-D-glucose = [(1-&gt;4)-alpha-D-glucosyl](n+1) + ADP + H(+). The protein operates within glycan biosynthesis; glycogen biosynthesis. Synthesizes alpha-1,4-glucan chains using ADP-glucose. The polypeptide is Glycogen synthase (Chlamydia caviae (strain ATCC VR-813 / DSM 19441 / 03DC25 / GPIC) (Chlamydophila caviae)).